A 258-amino-acid chain; its full sequence is Probable S-methyl-5'-thioinosine phosphorylase (258 aa).

53 to 54 (RH) is a phosphate binding site. Residue methionine 180 coordinates substrate. Threonine 181 provides a ligand contact to phosphate. A substrate-binding site is contributed by 204-206 (NQA).

Belongs to the PNP/MTAP phosphorylase family. MTAP subfamily. As to quaternary structure, homotrimer.

The enzyme catalyses S-methyl-5'-thioinosine + phosphate = 5-(methylsulfanyl)-alpha-D-ribose 1-phosphate + hypoxanthine. Its pathway is purine metabolism; purine nucleoside salvage. Its function is as follows. Catalyzes the reversible phosphorylation of S-methyl-5'-thioinosine (MTI) to hypoxanthine and 5-methylthioribose-1-phosphate. Involved in the breakdown of S-methyl-5'-thioadenosine (MTA), a major by-product of polyamine biosynthesis. Catabolism of (MTA) occurs via deamination to MTI and phosphorolysis to hypoxanthine. This is Probable S-methyl-5'-thioinosine phosphorylase from Methanosarcina acetivorans (strain ATCC 35395 / DSM 2834 / JCM 12185 / C2A).